Reading from the N-terminus, the 615-residue chain is Protein translocase subunit SecD (615 aa).

The next 6 membrane-spanning stretches (helical) occupy residues 10 to 30, 452 to 472, 477 to 497, 504 to 524, 548 to 570, and 585 to 605; these read YVML…NLFG, QGLE…IIFY, LIAT…MSLL, MPGI…NVLI, GAFS…LYAV, and GVAT…NLLY.

Belongs to the SecD/SecF family. SecD subfamily. Forms a complex with SecF. Part of the essential Sec protein translocation apparatus which comprises SecA, SecYEG and auxiliary proteins SecDF-YajC and YidC.

It is found in the cell inner membrane. Its function is as follows. Part of the Sec protein translocase complex. Interacts with the SecYEG preprotein conducting channel. SecDF uses the proton motive force (PMF) to complete protein translocation after the ATP-dependent function of SecA. The chain is Protein translocase subunit SecD from Shigella flexneri.